The sequence spans 215 residues: Pyrrolidone-carboxylate peptidase (215 aa).

Catalysis depends on residues glutamate 78, cysteine 141, and histidine 165.

It belongs to the peptidase C15 family. Homotetramer.

It localises to the cytoplasm. It catalyses the reaction Release of an N-terminal pyroglutamyl group from a polypeptide, the second amino acid generally not being Pro.. Functionally, removes 5-oxoproline from various penultimate amino acid residues except L-proline. This chain is Pyrrolidone-carboxylate peptidase, found in Streptococcus pyogenes serotype M3 (strain SSI-1).